Here is a 68-residue protein sequence, read N- to C-terminus: Putative protein YfaH (68 aa).

The chain is Putative protein YfaH (yfaH) from Escherichia coli (strain K12).